Consider the following 310-residue polypeptide: Phytoene synthase 2, chloroplastic (310 aa).

A chloroplast-targeting transit peptide spans 1 to 25 (DPDIVLPGNLGLLSEAYDRCGEVCA).

The protein belongs to the phytoene/squalene synthase family. As to quaternary structure, monomer.

It is found in the plastid. Its subcellular location is the chloroplast. The enzyme catalyses 2 (2E,6E,10E)-geranylgeranyl diphosphate = 15-cis-phytoene + 2 diphosphate. The protein operates within carotenoid biosynthesis; phytoene biosynthesis; all-trans-phytoene from geranylgeranyl diphosphate: step 1/1. Functionally, catalyzes the reaction from prephytoene diphosphate to phytoene. The protein is Phytoene synthase 2, chloroplastic (PSY2) of Solanum lycopersicum (Tomato).